We begin with the raw amino-acid sequence, 215 residues long: ATP-dependent Clp protease proteolytic subunit 1 (215 aa).

Residue S108 is the Nucleophile of the active site. H133 is a catalytic residue.

Belongs to the peptidase S14 family. Fourteen ClpP subunits assemble into 2 heptameric rings which stack back to back to give a disk-like structure with a central cavity, resembling the structure of eukaryotic proteasomes.

The protein resides in the cytoplasm. The catalysed reaction is Hydrolysis of proteins to small peptides in the presence of ATP and magnesium. alpha-casein is the usual test substrate. In the absence of ATP, only oligopeptides shorter than five residues are hydrolyzed (such as succinyl-Leu-Tyr-|-NHMec, and Leu-Tyr-Leu-|-Tyr-Trp, in which cleavage of the -Tyr-|-Leu- and -Tyr-|-Trp bonds also occurs).. Functionally, cleaves peptides in various proteins in a process that requires ATP hydrolysis. Has a chymotrypsin-like activity. Plays a major role in the degradation of misfolded proteins. This Paraburkholderia xenovorans (strain LB400) protein is ATP-dependent Clp protease proteolytic subunit 1.